The primary structure comprises 248 residues: Probable septum site-determining protein MinC (248 aa).

Residues 94-125 (GMPPAMRGGQPAADFEAPAGEPQANPGAPEPQ) form a disordered region.

The protein belongs to the MinC family. In terms of assembly, interacts with MinD and FtsZ.

Functionally, cell division inhibitor that blocks the formation of polar Z ring septums. Rapidly oscillates between the poles of the cell to destabilize FtsZ filaments that have formed before they mature into polar Z rings. Prevents FtsZ polymerization. The sequence is that of Probable septum site-determining protein MinC from Brucella abortus (strain S19).